We begin with the raw amino-acid sequence, 294 residues long: Nucleotide-binding protein Adeh_0147 (294 aa).

17–24 (GVSGSGKS) contributes to the ATP binding site. 68–71 (DARE) contacts GTP.

Belongs to the RapZ-like family.

Its function is as follows. Displays ATPase and GTPase activities. The sequence is that of Nucleotide-binding protein Adeh_0147 from Anaeromyxobacter dehalogenans (strain 2CP-C).